Here is a 207-residue protein sequence, read N- to C-terminus: Transcriptional regulator GfcR (207 aa).

The protein belongs to the purine/pyrimidine phosphoribosyltransferase family. GfcR subfamily.

The chain is Transcriptional regulator GfcR from Methanocella arvoryzae (strain DSM 22066 / NBRC 105507 / MRE50).